Here is a 679-residue protein sequence, read N- to C-terminus: MAKRHKHYENRGSSGRGRRGGRAGHRGRGGRRRYAERNNSERAAPVWAGSGDLGNPEMVDDYYFGRQADRRLWKKDSMRMGGFRPGDMGASEQPQSHLPARKRPVTFTLARDVYDPSHNLNQLLNKQLDEGAEEEDSNSSSPSASGDDEPEGEYEPNPEPKMYRISELNDDALFFVDEQGKLPTKIPAVEVAQQETPRSVEFNDTLTVGKVQLQLRQDSNGGTFVDAPHAKRIFRDDLYGDVSEEEDEPETPKTEQLDNSKSVRTMQPPSPVPQLLSTNIGRLTLSELASESESDTEKPTAEAGAEPPKGEPGFGFLDEDHLADMSEIQVTNIRLGAAAHSYFVASPRTFGDSVARWVDHDTMVDIALELGLPEGRLHAYLRHVYEQLVPPEEPADDGADDHYGDENYDDSEEDEQDDEYENDGLIALVEHTLANDPYRNRDYNTKSLEYRGHGSRKRLIIDKESMIDETVRTLLEDKAAQRSAKRAAKRHAKEDYIAEEARMSSDLFRKYPYGFHIENIIDELEAFLVSPRAALEFPPLDPHGRRTLKNLACAFALICKQVGQSTHTRVLVQKGGRYEPDYDAVNRIRRQRRVFMRVDVRRPRDDITPREPRAKFHVREGAIVGGDAPTIGQDNVGRRLLEKLGWTHGEGLGVHGNKGISEPLMARVKKNRSGLRYTE.

Disordered stretches follow at residues 1–40 (MAKRHKHYENRGSSGRGRRGGRAGHRGRGGRRRYAERNNS), 76–161 (DSMR…PEPK), 242–315 (VSEE…PGFG), and 391–419 (PEEPADDGADDHYGDENYDDSEEDEQDDE). Basic residues predominate over residues 16-32 (RGRRGGRAGHRGRGGRR). Residues 146–156 (GDDEPEGEYEP) are compositionally biased toward acidic residues. Over residues 406 to 419 (ENYDDSEEDEQDDE) the composition is skewed to acidic residues. An R3H domain is found at 514–576 (GFHIENIIDE…HTRVLVQKGG (63 aa)). The G-patch domain maps to 633-679 (QDNVGRRLLEKLGWTHGEGLGVHGNKGISEPLMARVKKNRSGLRYTE).

This sequence belongs to the SQS1 family.

The protein localises to the cytoplasm. It is found in the nucleus. Its function is as follows. May be involved in splicing. This is Protein SQS1 (SQS1) from Eremothecium gossypii (strain ATCC 10895 / CBS 109.51 / FGSC 9923 / NRRL Y-1056) (Yeast).